The chain runs to 107 residues: MYNLKMIGVDLTKISRFKNKSEKFAKRILSHEEFEKWEINKDHSFLATRWAIKEAIYKADNNFFEFSKINVKKDNYYWFQNFYISVSHEGDLIIAFVIKKEKNESQN.

Positions 10 and 54 each coordinate Mg(2+).

This sequence belongs to the P-Pant transferase superfamily. AcpS family. Mg(2+) is required as a cofactor.

The protein resides in the cytoplasm. It catalyses the reaction apo-[ACP] + CoA = holo-[ACP] + adenosine 3',5'-bisphosphate + H(+). Functionally, transfers the 4'-phosphopantetheine moiety from coenzyme A to a Ser of acyl-carrier-protein. The protein is Holo-[acyl-carrier-protein] synthase of Mycoplasma mobile (strain ATCC 43663 / 163K / NCTC 11711) (Mesomycoplasma mobile).